Reading from the N-terminus, the 248-residue chain is Probable transcriptional regulatory protein RHOS4_22610 (248 aa).

The disordered stretch occupies residues 1–21 (MAGHSKWANIQHRKGKQDKLR).

The protein belongs to the TACO1 family.

The protein resides in the cytoplasm. The sequence is that of Probable transcriptional regulatory protein RHOS4_22610 from Cereibacter sphaeroides (strain ATCC 17023 / DSM 158 / JCM 6121 / CCUG 31486 / LMG 2827 / NBRC 12203 / NCIMB 8253 / ATH 2.4.1.) (Rhodobacter sphaeroides).